A 200-amino-acid chain; its full sequence is Recombination protein RecR (200 aa).

The C4-type zinc-finger motif lies at 57 to 72; the sequence is CRQCRTLTEDDLCPQC. Positions 80–175 constitute a Toprim domain; sequence TLLCVVEGPM…IASRIAHGVP (96 aa).

It belongs to the RecR family.

Its function is as follows. May play a role in DNA repair. It seems to be involved in an RecBC-independent recombinational process of DNA repair. It may act with RecF and RecO. This chain is Recombination protein RecR, found in Pseudomonas fluorescens (strain Pf0-1).